The following is a 539-amino-acid chain: Tripartite motif-containing protein 26 (539 aa).

An RING-type zinc finger spans residues 16–57 (CSICLDYLRDPVTIDCGHVFCRSCTTDVRPISGSRPVCPLCK). The segment at 97–138 (QDAKLCERHREKLHYYCEDDGKLLCVMCRESREHRPHTAVLM) adopts a B box-type zinc-finger fold. Zn(2+)-binding residues include Cys-102, His-105, Cys-124, and His-130. Positions 188–227 (IVAEFEQGHQFLREREEHLLEQLAKLEQELTEGREKFKSR) form a coiled coil. The B30.2/SPRY domain maps to 295-539 (RGLREFQGKL…WPGTRLLLRP (245 aa)). The interval 376–437 (REGWSEDEEE…EEEEEVLESC (62 aa)) is disordered. Residues 380-434 (SEDEEEGDEEEEGEEEEEEEEAGYGDGYDDWETDEDEESLGDEEEEEEEEEEEVL) show a composition bias toward acidic residues.

This sequence belongs to the TRIM/RBCC family. Interacts with TBK1; this interaction bridges together TBK1 and NEMO in order to activate TBK1. Interacts with INCA1. Post-translationally, autoubiquitinates upon viral infection. In turn, autoubiquitinated TRIM26 recruits NEMO and bridges TBK1-NEMO interaction.

Its subcellular location is the cytoplasm. It localises to the nucleus. The enzyme catalyses S-ubiquitinyl-[E2 ubiquitin-conjugating enzyme]-L-cysteine + [acceptor protein]-L-lysine = [E2 ubiquitin-conjugating enzyme]-L-cysteine + N(6)-ubiquitinyl-[acceptor protein]-L-lysine.. Its function is as follows. E3 ubiquitin-protein ligase which regulates the IFN-beta production and antiviral response downstream of various DNA-encoded pattern-recognition receptors (PRRs). Also plays a central role in determining the response to different forms of oxidative stress by controlling levels of DNA glycosylases NEIL1, NEIL3 and NTH1 that are involved in repair of damaged DNA. Promotes nuclear IRF3 ubiquitination and proteasomal degradation. Bridges together TBK1 and NEMO during the innate response to viral infection leading to the activation of TBK1. Positively regulates LPS-mediated inflammatory innate immune response by catalyzing the 'Lys-11'-linked polyubiquitination of TAB1 to enhance its activation and subsequent NF-kappa-B and MAPK signaling. In a manner independent of its catalytic activity, inhibits WWP2, a SOX2-directed E3 ubiquitin ligase, and thus protects SOX2 from polyubiquitination and proteasomal degradation. Ubiquitinates the histone acetyltransferase protein complex component PHF20 and thereby triggers its degradation in the nucleus after its recruitment by the histone demethylase KDM6B, serving as a scaffold protein. Upon induction by TGF-beta, ubiquitinates the TFIID component TAF7 for proteasomal degradation. Induces ferroptosis by ubiquitinating SLC7A11, a critical protein for lipid reactive oxygen species (ROS) scavenging. The chain is Tripartite motif-containing protein 26 (TRIM26) from Pan troglodytes (Chimpanzee).